The following is a 566-amino-acid chain: Serine/threonine-protein kinase haspin homolog (566 aa).

One can recognise a Protein kinase domain in the interval 248–566 (LLNTKKIGEG…HCANYLFNLN (319 aa)). Residues 254–262 (IGEGAYGEV), lysine 282, 377–382 (KFAGSD), 418–423 (DLHLGN), and 456–458 (DYT) each bind ATP. Aspartate 418 functions as the Proton acceptor in the catalytic mechanism.

Belongs to the protein kinase superfamily. Ser/Thr protein kinase family. Haspin subfamily. In terms of assembly, interacts with pds5 and vtd. Mg(2+) is required as a cofactor.

The protein localises to the nucleus lamina. The protein resides in the chromosome. Its subcellular location is the cytoplasm. It is found in the cytoskeleton. It localises to the spindle. It catalyses the reaction L-seryl-[protein] + ATP = O-phospho-L-seryl-[protein] + ADP + H(+). It carries out the reaction L-threonyl-[protein] + ATP = O-phospho-L-threonyl-[protein] + ADP + H(+). Its function is as follows. Serine/threonine-protein kinase that phosphorylates histone H3 at 'Thr-4' (H3T3ph) during mitosis and interphase. Function is essential for chromosome organization during mitosis and genome organization in interphase cells, thus playing a functional role in gene regulation. During mitosis, may act through H3T3ph to both position and modulate activation of AURKB and other components of the chromosomal passenger complex (CPC) at centromeres to ensure proper chromatid cohesion, metaphase alignment and normal progression through the cell cycle. During interphase, associates with the cohesion complex and mediates pds5 binding to chromatin to ensure correct sister chromatid cohesion, chromatin organization, and also functions with Pds5-cohesin to modify Polycomb-dependent homeotic transformations. Function during interphase is required for insulator activity, nuclear compaction, heterochromatin-induced position-effect variegation and PcG-mediated pairing-sensitive silencing. The polypeptide is Serine/threonine-protein kinase haspin homolog (Drosophila melanogaster (Fruit fly)).